Reading from the N-terminus, the 334-residue chain is uncharacterized protein (334 aa).

This sequence belongs to the ADP-ribosylglycohydrolase family.

This is an uncharacterized protein from Escherichia coli (strain K12).